The following is a 317-amino-acid chain: Protein lifeguard 2 (317 aa).

The tract at residues 1 to 54 is disordered; it reads MTQGKLSVANKAPGTEGQQHQANGEKKDAPAVPSAPPSYEEATSGEGLKAGTFP. Transmembrane regions (helical) follow at residues 107–127, 139–159, and 166–186; these read VYTILLVQLLVTLAVVALFTF, PGWYWASYAVFFATYLTLACC, and FPWNLILLTIFTLSMAYLTGM. A glycan (N-linked (GlcNAc...) asparagine) is linked at asparagine 192. Helical transmembrane passes span 195 to 215, 226 to 246, 252 to 272, and 291 to 311; these read SVLLCLVITALVCLSVTIFSF, GVLFVLLMTLFFSGLLLAVLL, PWLHAVYAVLGAGVFTLFLAF, and IFGALNIYLDIIYIFTFFLQL.

It belongs to the BI1 family. LFG subfamily. Interacts with FAS/TNFRSF6 and BAX. Brain. Highly expressed in cerebellum, also found in cortex, olfactory bulb, and hippocampus.

Its subcellular location is the cell membrane. The protein localises to the membrane raft. It is found in the postsynaptic cell membrane. Antiapoptotic protein which protects cells uniquely from Fas-induced apoptosis. Regulates Fas-mediated apoptosis in neurons by interfering with caspase-8 activation. Plays a role in cerebellar development by affecting cerebellar size, internal granular layer (IGL) thickness, and Purkinje cell (PC) development. This Mus musculus (Mouse) protein is Protein lifeguard 2 (Faim2).